We begin with the raw amino-acid sequence, 122 residues long: Large ribosomal subunit protein uL14 (122 aa).

This sequence belongs to the universal ribosomal protein uL14 family. As to quaternary structure, part of the 50S ribosomal subunit. Forms a cluster with proteins L3 and L19. In the 70S ribosome, L14 and L19 interact and together make contacts with the 16S rRNA in bridges B5 and B8.

Binds to 23S rRNA. Forms part of two intersubunit bridges in the 70S ribosome. The sequence is that of Large ribosomal subunit protein uL14 from Bradyrhizobium sp. (strain BTAi1 / ATCC BAA-1182).